The primary structure comprises 62 residues: Potassium channel toxin alpha-KTx 22.1 (62 aa).

Residues 1-18 (MQKLFIVFVLFCILRLDA) form the signal peptide. 3 disulfide bridges follow: Cys-28/Cys-46, Cys-33/Cys-59, and Cys-37/Cys-61.

It belongs to the short scorpion toxin superfamily. Potassium channel inhibitor family. Alpha-KTx 22 subfamily. Expressed by the venom gland.

The protein resides in the secreted. Functionally, may block potassium channels. This chain is Potassium channel toxin alpha-KTx 22.1, found in Olivierus martensii (Manchurian scorpion).